The primary structure comprises 237 residues: Phosphoribosylaminoimidazole-succinocarboxamide synthase (237 aa).

This sequence belongs to the SAICAR synthetase family.

It carries out the reaction 5-amino-1-(5-phospho-D-ribosyl)imidazole-4-carboxylate + L-aspartate + ATP = (2S)-2-[5-amino-1-(5-phospho-beta-D-ribosyl)imidazole-4-carboxamido]succinate + ADP + phosphate + 2 H(+). It functions in the pathway purine metabolism; IMP biosynthesis via de novo pathway; 5-amino-1-(5-phospho-D-ribosyl)imidazole-4-carboxamide from 5-amino-1-(5-phospho-D-ribosyl)imidazole-4-carboxylate: step 1/2. In Listeria monocytogenes serotype 4a (strain HCC23), this protein is Phosphoribosylaminoimidazole-succinocarboxamide synthase.